A 356-amino-acid polypeptide reads, in one-letter code: Trifolitoxin operon protein TfxC (356 aa).

The sequence is that of Trifolitoxin operon protein TfxC (tfxC) from Rhizobium leguminosarum bv. trifolii.